The primary structure comprises 103 residues: Co-chaperonin GroES (103 aa).

This sequence belongs to the GroES chaperonin family. Heptamer of 7 subunits arranged in a ring. Interacts with the chaperonin GroEL.

The protein resides in the cytoplasm. In terms of biological role, together with the chaperonin GroEL, plays an essential role in assisting protein folding. The GroEL-GroES system forms a nano-cage that allows encapsulation of the non-native substrate proteins and provides a physical environment optimized to promote and accelerate protein folding. GroES binds to the apical surface of the GroEL ring, thereby capping the opening of the GroEL channel. The polypeptide is Co-chaperonin GroES (Crocosphaera subtropica (strain ATCC 51142 / BH68) (Cyanothece sp. (strain ATCC 51142))).